The sequence spans 343 residues: Dihydroorotase (343 aa).

Zn(2+) is bound by residues histidine 14 and histidine 16. Substrate contacts are provided by residues 16-18 (HLR) and asparagine 42. 3 residues coordinate Zn(2+): lysine 100, histidine 137, and histidine 175. Lysine 100 is subject to N6-carboxylysine. Substrate is bound at residue histidine 137. Leucine 220 contributes to the substrate binding site. Aspartate 248 serves as a coordination point for Zn(2+). The active site involves aspartate 248. Positions 252 and 264 each coordinate substrate.

The protein belongs to the metallo-dependent hydrolases superfamily. DHOase family. Class II DHOase subfamily. Homodimer. Requires Zn(2+) as cofactor.

It carries out the reaction (S)-dihydroorotate + H2O = N-carbamoyl-L-aspartate + H(+). Its pathway is pyrimidine metabolism; UMP biosynthesis via de novo pathway; (S)-dihydroorotate from bicarbonate: step 3/3. In terms of biological role, catalyzes the reversible cyclization of carbamoyl aspartate to dihydroorotate. This is Dihydroorotase from Synechococcus sp. (strain CC9902).